We begin with the raw amino-acid sequence, 32 residues long: U3-ctenitoxin-Pk1a (32 aa).

3 disulfide bridges follow: cysteine 3–cysteine 17, cysteine 10–cysteine 21, and cysteine 16–cysteine 30.

The protein belongs to the neurotoxin 17 (21C2) family. As to expression, expressed by the venom gland.

It localises to the secreted. May act as a neurotoxin. This Phoneutria keyserlingi (Brazilian wandering spider) protein is U3-ctenitoxin-Pk1a.